Reading from the N-terminus, the 739-residue chain is Phosphoribosylformylglycinamidine synthase subunit PurL (739 aa).

H53 is a catalytic residue. The ATP site is built by Y56 and K95. Mg(2+) is bound at residue E97. Residues S98–H101 and R120 contribute to the substrate site. The active-site Proton acceptor is H99. D121 serves as a coordination point for Mg(2+). Residue Q244 coordinates substrate. Mg(2+) is bound at residue D274. E318–Q320 provides a ligand contact to substrate. Residues D501 and G538 each contribute to the ATP site. Residue N539 coordinates Mg(2+). S541 contacts substrate.

This sequence belongs to the FGAMS family. In terms of assembly, monomer. Part of the FGAM synthase complex composed of 1 PurL, 1 PurQ and 2 PurS subunits.

Its subcellular location is the cytoplasm. It carries out the reaction N(2)-formyl-N(1)-(5-phospho-beta-D-ribosyl)glycinamide + L-glutamine + ATP + H2O = 2-formamido-N(1)-(5-O-phospho-beta-D-ribosyl)acetamidine + L-glutamate + ADP + phosphate + H(+). Its pathway is purine metabolism; IMP biosynthesis via de novo pathway; 5-amino-1-(5-phospho-D-ribosyl)imidazole from N(2)-formyl-N(1)-(5-phospho-D-ribosyl)glycinamide: step 1/2. Functionally, part of the phosphoribosylformylglycinamidine synthase complex involved in the purines biosynthetic pathway. Catalyzes the ATP-dependent conversion of formylglycinamide ribonucleotide (FGAR) and glutamine to yield formylglycinamidine ribonucleotide (FGAM) and glutamate. The FGAM synthase complex is composed of three subunits. PurQ produces an ammonia molecule by converting glutamine to glutamate. PurL transfers the ammonia molecule to FGAR to form FGAM in an ATP-dependent manner. PurS interacts with PurQ and PurL and is thought to assist in the transfer of the ammonia molecule from PurQ to PurL. The polypeptide is Phosphoribosylformylglycinamidine synthase subunit PurL (Listeria monocytogenes serotype 4b (strain CLIP80459)).